We begin with the raw amino-acid sequence, 466 residues long: MTTAQPDAQPGAQPIADLGLKPGQLHLNPGVDDLYAHAIRLGEGVQAATGPLTVRTNKTGRSPKDRFIVEDDQTRETVWWEGFNQPISAEVFDRLLDKMVKYAEGRELFVQQVFAGTDAEHRIPVRMITEMAYHSLFIRNMFVRPTAEELQNFQAEWTVLNIPSFKADPAVDGTRTDTFILVNFSKKMIIAGGTQYAGENKKGIFGVLNYLLPAKGIMPMHCSANVGEDGDVALFFGLSGTGKTTLSADPGRKLIGDDEHGWTDTGVFNFEGGCYAKVINLSAEAEPAIYQTTRNYGTVLENVVLDESGTPDLDDGSLTENTRSAYPIEQIANIQPGSVGGIPKNVVFLTADAFGVLPPLSRLTPEQMMYQFISGFTAKIPGTEEGVTDPTPTFSTCFGAPFMPRHPGEYARLLAQKVEESGAKVWLVNTGWTGGKYGEGHRMSLNLTRLKSRDSHFADHCPPKQV.

3 residues coordinate substrate: arginine 61, tyrosine 196, and lysine 202. ATP contacts are provided by residues lysine 202, histidine 221, and glycine 237–threonine 245. Residues lysine 202 and histidine 221 each contribute to the Mn(2+) site. Residue aspartate 258 participates in Mn(2+) binding. Glutamate 286, arginine 323, and threonine 448 together coordinate ATP. Arginine 323 is a binding site for substrate.

Belongs to the phosphoenolpyruvate carboxykinase (ATP) family. The cofactor is Mn(2+).

The protein localises to the cytoplasm. The enzyme catalyses oxaloacetate + ATP = phosphoenolpyruvate + ADP + CO2. It functions in the pathway carbohydrate biosynthesis; gluconeogenesis. Functionally, involved in the gluconeogenesis. Catalyzes the conversion of oxaloacetate (OAA) to phosphoenolpyruvate (PEP) through direct phosphoryl transfer between the nucleoside triphosphate and OAA. This Deinococcus radiodurans (strain ATCC 13939 / DSM 20539 / JCM 16871 / CCUG 27074 / LMG 4051 / NBRC 15346 / NCIMB 9279 / VKM B-1422 / R1) protein is Phosphoenolpyruvate carboxykinase (ATP).